The primary structure comprises 188 residues: ATP synthase subunit delta (188 aa).

Belongs to the ATPase delta chain family. In terms of assembly, F-type ATPases have 2 components, F(1) - the catalytic core - and F(0) - the membrane proton channel. F(1) has five subunits: alpha(3), beta(3), gamma(1), delta(1), epsilon(1). F(0) has three main subunits: a(1), b(2) and c(10-14). The alpha and beta chains form an alternating ring which encloses part of the gamma chain. F(1) is attached to F(0) by a central stalk formed by the gamma and epsilon chains, while a peripheral stalk is formed by the delta and b chains.

Its subcellular location is the cell inner membrane. In terms of biological role, f(1)F(0) ATP synthase produces ATP from ADP in the presence of a proton or sodium gradient. F-type ATPases consist of two structural domains, F(1) containing the extramembraneous catalytic core and F(0) containing the membrane proton channel, linked together by a central stalk and a peripheral stalk. During catalysis, ATP synthesis in the catalytic domain of F(1) is coupled via a rotary mechanism of the central stalk subunits to proton translocation. Functionally, this protein is part of the stalk that links CF(0) to CF(1). It either transmits conformational changes from CF(0) to CF(1) or is implicated in proton conduction. In Sinorhizobium fredii (strain NBRC 101917 / NGR234), this protein is ATP synthase subunit delta.